A 493-amino-acid polypeptide reads, in one-letter code: Neuronal acetylcholine receptor subunit alpha-6 (493 aa).

An N-terminal signal peptide occupies residues M1 to G30. The Extracellular segment spans residues C31 to P240. N-linked (GlcNAc...) asparagine glycans are attached at residues N54 and N171. 2 cysteine pairs are disulfide-bonded: C158-C172 and C222-C223. Transmembrane regions (helical) follow at residues M241 to P265, V272 to T290, and Y306 to I327. Residues H328–R464 lie on the Cytoplasmic side of the membrane. S401 is subject to Phosphoserine. Residues V465–Q484 form a helical membrane-spanning segment.

Belongs to the ligand-gated ion channel (TC 1.A.9) family. Acetylcholine receptor (TC 1.A.9.1) subfamily. Alpha-6/CHRNA6 sub-subfamily. Neuronal AChR is composed of two different types of subunits: alpha and non-alpha (beta). CHRNA6/alpha-6 subunit can be combined to CHRNB2/beta-2 and CHRNA4/alpha-4 to give rise to functional receptors. Interacts with LYPD6. In terms of tissue distribution, predominantly expressed in only a few brain areas, including dopaminergic neurons, norepirephrine neurons and cells of the visual system.

The protein resides in the synaptic cell membrane. The catalysed reaction is Ca(2+)(in) = Ca(2+)(out). The enzyme catalyses K(+)(in) = K(+)(out). It carries out the reaction Na(+)(in) = Na(+)(out). Activated by a myriad of ligands such as acetylcholine, cytisine and nicotine. CHRNA6 nAChR activity is inhibited by the antagonists alpha-conotoxin MII and PIA, a small disulfide-constrained peptides from cone snails. In terms of biological role, component of neuronal acetylcholine receptors (nAChRs) that function as pentameric, ligand-gated cation channels with high calcium permeability among other activities. nAChRs are excitatory neurotrasnmitter receptors formed by a collection of nAChR subunits known to mediate synaptic transmission in the nervous system and the neuromuscular junction. Each nAchR subunit confers differential attributes to channel properties, including activation, deactivation and desensitization kinetics, pH sensitivity, cation permeability, and binding to allosteric modulators. CHRNA6 forms pentameric channels with CHRNB2 and CHRNA4 that exhibit high sensitivity to ACh and nicotine and are predominantly expressed in only a few brain areas, including dopaminergic neurons, norepirephrine neurons and cells of the visual system. nAChrs containing CHRNA6 subunits mediate endogenous cholinergic modulation of dopamine and gamma-aminobutyric acid (GABA) release in response to nicotine at nerve terminals. This Rattus norvegicus (Rat) protein is Neuronal acetylcholine receptor subunit alpha-6 (Chrna6).